We begin with the raw amino-acid sequence, 278 residues long: Inosose isomerase (278 aa).

A divalent metal cation contacts are provided by E142, D174, H200, and E246.

It belongs to the IolI family. It depends on Mn(2+) as a cofactor. The cofactor is Fe(2+). Co(2+) is required as a cofactor.

The catalysed reaction is scyllo-inosose = scyllo-inosine. It participates in polyol metabolism; myo-inositol degradation into acetyl-CoA. In terms of biological role, involved in the reversible interconverion of 2-keto-myo-inositol (2KMI, inosose or 2,4,6/3,5-pentahydroxycyclohexanone) to 1-keto-D-chiro-inositol (1KDCI or 2,3,5/4,6-pentahydroxycyclohexanone). The polypeptide is Inosose isomerase (iolI) (Bacillus subtilis (strain 168)).